We begin with the raw amino-acid sequence, 147 residues long: DNA-directed RNA polymerase subunit 6 homolog (147 aa).

The tract at residues 20–39 (ETEEENFVDSEEESEDKDEI) is disordered.

This sequence belongs to the archaeal RpoK/eukaryotic RPB6 RNA polymerase subunit family. Part of the viral DNA-directed RNA polymerase that consists of 8 polII-like subunits (RPB1, RPB2, RPB3, RPB5, RPB6, RPB7, RPB9, RPB10), a capping enzyme and a termination factor.

It localises to the host cytoplasm. The protein resides in the virion. In terms of biological role, component of the DNA-directed RNA polymerase (RNAP) that catalyzes the transcription in the cytoplasm of viral DNA into RNA using the four ribonucleoside triphosphates as substrates. In Ornithodoros (relapsing fever ticks), this protein is DNA-directed RNA polymerase subunit 6 homolog.